The following is a 238-amino-acid chain: MKKQLYQLSNTDIAFPPIECALDSPDGLLAIGGDLSLARLSNAYNNGIFPWFSEDEPIMWWSPSERGIVELDNFHISKSLRKHLKKHPVTVTINNAFIEVIEACCEQRIDTDGTWITSDMLTAYINAHNAGIAHSVEVWREGELAGGLYGIMQNGVFCGESMFHHQTNCSKLAMWALVNWLKRHNAHFIDCQLENPYLMSLGATVIPRPAFLAKLHAAQNYKVDPAMWIPQELNAIYE.

It belongs to the L/F-transferase family.

It is found in the cytoplasm. The catalysed reaction is N-terminal L-lysyl-[protein] + L-leucyl-tRNA(Leu) = N-terminal L-leucyl-L-lysyl-[protein] + tRNA(Leu) + H(+). It catalyses the reaction N-terminal L-arginyl-[protein] + L-leucyl-tRNA(Leu) = N-terminal L-leucyl-L-arginyl-[protein] + tRNA(Leu) + H(+). It carries out the reaction L-phenylalanyl-tRNA(Phe) + an N-terminal L-alpha-aminoacyl-[protein] = an N-terminal L-phenylalanyl-L-alpha-aminoacyl-[protein] + tRNA(Phe). Functions in the N-end rule pathway of protein degradation where it conjugates Leu, Phe and, less efficiently, Met from aminoacyl-tRNAs to the N-termini of proteins containing an N-terminal arginine or lysine. The sequence is that of Leucyl/phenylalanyl-tRNA--protein transferase from Pseudoalteromonas translucida (strain TAC 125).